A 256-amino-acid polypeptide reads, in one-letter code: uncharacterized protein (256 aa).

9–33 (VTGGGQGIGAAIAQLFAENGMKVVI) contributes to the NADP(+) binding site. Serine 140 lines the substrate pocket. The active-site Proton acceptor is tyrosine 153.

This sequence belongs to the short-chain dehydrogenases/reductases (SDR) family.

This is an uncharacterized protein from Thermotoga maritima (strain ATCC 43589 / DSM 3109 / JCM 10099 / NBRC 100826 / MSB8).